Consider the following 101-residue polypeptide: Ubiquitin-related modifier 1 homolog (101 aa).

At glycine 101 the chain carries 1-thioglycine. Glycine 101 participates in a covalent cross-link: Glycyl lysine isopeptide (Gly-Lys) (interchain with K-? in acceptor proteins).

The protein belongs to the URM1 family. As to quaternary structure, interacts with cer. Post-translationally, C-terminal thiocarboxylation occurs in 2 steps, it is first acyl-adenylated (-COAMP) via the hesA/moeB/thiF part of the MOCS3 homolog, then thiocarboxylated (-COSH) via the rhodanese domain of the MOCS3 homolog.

Its subcellular location is the cytoplasm. It participates in tRNA modification; 5-methoxycarbonylmethyl-2-thiouridine-tRNA biosynthesis. Functionally, acts as a sulfur carrier required for 2-thiolation of mcm(5)S(2)U at tRNA wobble positions of cytosolic tRNA(Lys), tRNA(Glu) and tRNA(Gln). Serves as sulfur donor in tRNA 2-thiolation reaction by being thiocarboxylated (-COSH) at its C-terminus by MOCS3. The sulfur is then transferred to tRNA to form 2-thiolation of mcm(5)S(2)U. Also acts as a ubiquitin-like protein (UBL) that is covalently conjugated via an isopeptide bond to lysine residues of target proteins such as Prx2/Jafrac1, Ciao1, Eip71CD and GILT1. The thiocarboxylated form serves as substrate for conjugation and oxidative stress specifically induces the formation of UBL-protein conjugates. In Drosophila erecta (Fruit fly), this protein is Ubiquitin-related modifier 1 homolog.